A 360-amino-acid chain; its full sequence is Chorismate synthase (360 aa).

Positions 48 and 54 each coordinate NADP(+). Residues 125–127 (RSS), 242–243 (NG), Gly-283, 298–302 (KPTSS), and Arg-324 each bind FMN.

Belongs to the chorismate synthase family. As to quaternary structure, homotetramer. FMNH2 serves as cofactor.

The enzyme catalyses 5-O-(1-carboxyvinyl)-3-phosphoshikimate = chorismate + phosphate. It functions in the pathway metabolic intermediate biosynthesis; chorismate biosynthesis; chorismate from D-erythrose 4-phosphate and phosphoenolpyruvate: step 7/7. In terms of biological role, catalyzes the anti-1,4-elimination of the C-3 phosphate and the C-6 proR hydrogen from 5-enolpyruvylshikimate-3-phosphate (EPSP) to yield chorismate, which is the branch point compound that serves as the starting substrate for the three terminal pathways of aromatic amino acid biosynthesis. This reaction introduces a second double bond into the aromatic ring system. In Gluconobacter oxydans (strain 621H) (Gluconobacter suboxydans), this protein is Chorismate synthase.